Consider the following 202-residue polypeptide: Nucleoid occlusion factor SlmA (202 aa).

The HTH tetR-type domain maps to 14–75 (KERQQQVLEV…ALIERIEQTL (62 aa)). The H-T-H motif DNA-binding region spans 38 to 57 (TTERLAKAVGVSEGALYRYF).

Belongs to the nucleoid occlusion factor SlmA family. As to quaternary structure, homodimer. Interacts with FtsZ.

It localises to the cytoplasm. The protein resides in the nucleoid. In terms of biological role, required for nucleoid occlusion (NO) phenomenon, which prevents Z-ring formation and cell division over the nucleoid. Acts as a DNA-associated cell division inhibitor that binds simultaneously chromosomal DNA and FtsZ, and disrupts the assembly of FtsZ polymers. SlmA-DNA-binding sequences (SBS) are dispersed on non-Ter regions of the chromosome, preventing FtsZ polymerization at these regions. The protein is Nucleoid occlusion factor SlmA of Haemophilus ducreyi (strain 35000HP / ATCC 700724).